Consider the following 346-residue polypeptide: Alkylated DNA repair protein ALKBH8 homolog (346 aa).

The tract at residues 1-21 is disordered; that stretch reads MVQPRFVRPTQSSPSSISGEP. The span at 12–21 shows a compositional bias: low complexity; the sequence is SSPSSISGEP. Residues 24-102 form the RRM domain; that stretch reads SNLYVANCGP…RSLHIRYSVL (79 aa). A Fe2OG dioxygenase domain is found at 208 to 328; it reads NLDQLTVNEY…RVSFTLRKVR (121 aa). Positions 226, 228, and 298 each coordinate Fe cation. Arg319 and Arg325 together coordinate 2-oxoglutarate.

Belongs to the alkB family. Requires Fe(2+) as cofactor.

In terms of biological role, binds tRNA and catalyzes the iron and alpha-ketoglutarate dependent hydroxylation of 5-methylcarboxymethyl uridine at the wobble position of the anticodon loop in tRNA via its dioxygenase domain, giving rise to 5-(S)-methoxycarbonylhydroxymethyluridine. The protein is Alkylated DNA repair protein ALKBH8 homolog of Arabidopsis thaliana (Mouse-ear cress).